The chain runs to 100 residues: Putative pterin-4-alpha-carbinolamine dehydratase (100 aa).

This sequence belongs to the pterin-4-alpha-carbinolamine dehydratase family.

The catalysed reaction is (4aS,6R)-4a-hydroxy-L-erythro-5,6,7,8-tetrahydrobiopterin = (6R)-L-erythro-6,7-dihydrobiopterin + H2O. The sequence is that of Putative pterin-4-alpha-carbinolamine dehydratase from Rhodopseudomonas palustris (strain TIE-1).